A 435-amino-acid polypeptide reads, in one-letter code: Gamma-glutamyl phosphate reductase (435 aa).

This sequence belongs to the gamma-glutamyl phosphate reductase family.

Its subcellular location is the cytoplasm. It catalyses the reaction L-glutamate 5-semialdehyde + phosphate + NADP(+) = L-glutamyl 5-phosphate + NADPH + H(+). Its pathway is amino-acid biosynthesis; L-proline biosynthesis; L-glutamate 5-semialdehyde from L-glutamate: step 2/2. In terms of biological role, catalyzes the NADPH-dependent reduction of L-glutamate 5-phosphate into L-glutamate 5-semialdehyde and phosphate. The product spontaneously undergoes cyclization to form 1-pyrroline-5-carboxylate. This is Gamma-glutamyl phosphate reductase from Synechococcus sp. (strain WH7803).